Here is a 660-residue protein sequence, read N- to C-terminus: Putative ATP-dependent RNA helicase Pl10 (660 aa).

Residues 1–11 (MSHVAEEDELG) are compositionally biased toward acidic residues. The disordered stretch occupies residues 1–117 (MSHVAEEDEL…SRGGRSGFGK (117 aa)). Residue Ser-2 is modified to N-acetylserine. Residues 12 to 21 (LDQQLAGLDL) show a composition bias toward low complexity. Residues 24 to 34 (RDSQSGGSTAS) show a composition bias toward polar residues. The span at 44-66 (RNREAAKAFYDKDGSRWSKDKDA) shows a compositional bias: basic and acidic residues. Lys-55 is modified (N6-acetyllysine). Phosphoserine is present on residues Ser-80, Ser-84, and Ser-89. Basic and acidic residues predominate over residues 93 to 103 (GRFDERGRSDY). Arg-100 is subject to Omega-N-methylarginine. At Ser-101 the chain carries Phosphoserine. Phosphotyrosine is present on Tyr-103. Residue Arg-109 is modified to Omega-N-methylarginine. Lys-117 bears the N6-acetyllysine mark. A Q motif motif is present at residues 179 to 207 (ESFSDVEMGEIIMGNIELTRYTRPTPVQK). A Phosphoserine modification is found at Ser-182. ATP is bound at residue 199–206 (YTRPTPVQ). One can recognise a Helicase ATP-binding domain in the interval 210–402 (IPIIKEKRDL…RDFLDEYIFL (193 aa)). Residue Lys-214 forms a Glycyl lysine isopeptide (Lys-Gly) (interchain with G-Cter in SUMO2) linkage. An ATP-binding site is contributed by 223 to 230 (AQTGSGKT). The DEAD box signature appears at 346–349 (DEAD). In terms of domain architecture, Helicase C-terminal spans 413 to 574 (NITQKVVWVE…EVPSWLENMA (162 aa)). Ser-455 carries the phosphoserine modification. Arg-590 carries the omega-N-methylarginine modification. Residues Ser-592, Ser-603, and Ser-610 each carry the phosphoserine modification. The disordered stretch occupies residues 598 to 632 (RDYRQSSGASSSSFSSGRASNSRSGGGSHGSSRGF). The segment covering 602–620 (QSSGASSSSFSSGRASNSR) has biased composition (low complexity). 2 positions are modified to omega-N-methylarginine: Arg-615 and Arg-630. Over residues 621 to 632 (SGGGSHGSSRGF) the composition is skewed to gly residues.

The protein belongs to the DEAD box helicase family. DDX3/DED1 subfamily. Testis.

It catalyses the reaction ATP + H2O = ADP + phosphate + H(+). Its function is as follows. Putative ATP-dependent RNA helicase. Possible role in a key step of the spermatogenic process. The chain is Putative ATP-dependent RNA helicase Pl10 (D1Pas1) from Mus musculus (Mouse).